We begin with the raw amino-acid sequence, 148 residues long: Large-conductance mechanosensitive channel (148 aa).

The next 2 helical transmembrane spans lie at 16-36 and 89-109; these read VMDLAVGVIIGGAFSTIVNSI and GSFITVLINFLILAFIIFLMV.

Belongs to the MscL family. As to quaternary structure, homopentamer.

The protein resides in the cell inner membrane. Its function is as follows. Channel that opens in response to stretch forces in the membrane lipid bilayer. May participate in the regulation of osmotic pressure changes within the cell. The chain is Large-conductance mechanosensitive channel from Paraburkholderia xenovorans (strain LB400).